We begin with the raw amino-acid sequence, 369 residues long: Chaperone protein DnaJ (369 aa).

The J domain maps to Asp-3 to Gly-67. The CR-type zinc-finger motif lies at Gly-123–Arg-205. The Zn(2+) site is built by Cys-136, Cys-139, Cys-153, Cys-156, Cys-179, Cys-182, Cys-193, and Cys-196. CXXCXGXG motif repeat units lie at residues Cys-136 to Cys-143, Cys-153 to Gly-160, Cys-179 to Gly-186, and Cys-193 to Gly-200.

Belongs to the DnaJ family. In terms of assembly, homodimer. The cofactor is Zn(2+).

Its subcellular location is the cytoplasm. Its function is as follows. Participates actively in the response to hyperosmotic and heat shock by preventing the aggregation of stress-denatured proteins and by disaggregating proteins, also in an autonomous, DnaK-independent fashion. Unfolded proteins bind initially to DnaJ; upon interaction with the DnaJ-bound protein, DnaK hydrolyzes its bound ATP, resulting in the formation of a stable complex. GrpE releases ADP from DnaK; ATP binding to DnaK triggers the release of the substrate protein, thus completing the reaction cycle. Several rounds of ATP-dependent interactions between DnaJ, DnaK and GrpE are required for fully efficient folding. Also involved, together with DnaK and GrpE, in the DNA replication of plasmids through activation of initiation proteins. The chain is Chaperone protein DnaJ from Leifsonia xyli subsp. xyli (strain CTCB07).